The following is a 170-amino-acid chain: Bacilliredoxin SRU_1493 (170 aa).

The interval 140 to 170 is disordered; that stretch reads CGDEEPPADAPSRPDPSSSGEGLPSTFQSIT.

Belongs to the bacilliredoxin family.

This is Bacilliredoxin SRU_1493 from Salinibacter ruber (strain DSM 13855 / M31).